We begin with the raw amino-acid sequence, 475 residues long: Ribulose bisphosphate carboxylase large chain (475 aa).

Positions Met-1–Ser-2 are excised as a propeptide. Pro-3 bears the N-acetylproline mark. Lys-14 bears the N6,N6,N6-trimethyllysine mark. The substrate site is built by Asn-123 and Thr-173. Residue Lys-175 is the Proton acceptor of the active site. Lys-177 is a substrate binding site. Positions 201, 203, and 204 each coordinate Mg(2+). An N6-carboxylysine modification is found at Lys-201. His-294 serves as the catalytic Proton acceptor. Arg-295, His-327, and Ser-379 together coordinate substrate.

The protein belongs to the RuBisCO large chain family. Type I subfamily. Heterohexadecamer of 8 large chains and 8 small chains; disulfide-linked. The disulfide link is formed within the large subunit homodimers. Mg(2+) is required as a cofactor. The disulfide bond which can form in the large chain dimeric partners within the hexadecamer appears to be associated with oxidative stress and protein turnover.

Its subcellular location is the plastid. It localises to the chloroplast. The catalysed reaction is 2 (2R)-3-phosphoglycerate + 2 H(+) = D-ribulose 1,5-bisphosphate + CO2 + H2O. It carries out the reaction D-ribulose 1,5-bisphosphate + O2 = 2-phosphoglycolate + (2R)-3-phosphoglycerate + 2 H(+). Its function is as follows. RuBisCO catalyzes two reactions: the carboxylation of D-ribulose 1,5-bisphosphate, the primary event in carbon dioxide fixation, as well as the oxidative fragmentation of the pentose substrate in the photorespiration process. Both reactions occur simultaneously and in competition at the same active site. The polypeptide is Ribulose bisphosphate carboxylase large chain (Quercus rubra (Northern red oak)).